Consider the following 482-residue polypeptide: Dual specificity protein phosphatase 10 (482 aa).

The 118-residue stretch at 168–285 (PSQGPVIIDC…FKQNHENLCD (118 aa)) folds into the Rhodanese domain. The tract at residues 199-215 (KISRRRLQQGKITVLDL) is interaction with MAP kinases. In terms of domain architecture, Tyrosine-protein phosphatase spans 321–464 (ELTPILPFLF…LLEFEEDLNN (144 aa)). The active-site Phosphocysteine intermediate is the Cys408.

The protein belongs to the protein-tyrosine phosphatase family. Non-receptor class dual specificity subfamily. In terms of assembly, monomer. Interacts with MAPK14. Expressed in keratinocytes (at protein level). Detected in brain.

It is found in the cytoplasm. It localises to the nucleus. The catalysed reaction is O-phospho-L-tyrosyl-[protein] + H2O = L-tyrosyl-[protein] + phosphate. It carries out the reaction O-phospho-L-seryl-[protein] + H2O = L-seryl-[protein] + phosphate. It catalyses the reaction O-phospho-L-threonyl-[protein] + H2O = L-threonyl-[protein] + phosphate. Functionally, protein phosphatase involved in the inactivation of MAP kinases. Has a specificity for the MAPK11/MAPK12/MAPK13/MAPK14 subfamily. It preferably dephosphorylates p38. The polypeptide is Dual specificity protein phosphatase 10 (DUSP10) (Homo sapiens (Human)).